Reading from the N-terminus, the 273-residue chain is Glutamate racemase (273 aa).

Residues 11–12 and 43–44 contribute to the substrate site; these read DS and YG. Cys-74 acts as the Proton donor/acceptor in catalysis. Substrate is bound at residue 75 to 76; sequence NT. Cys-185 (proton donor/acceptor) is an active-site residue. 186–187 lines the substrate pocket; it reads TH.

It belongs to the aspartate/glutamate racemases family.

The enzyme catalyses L-glutamate = D-glutamate. It participates in cell wall biogenesis; peptidoglycan biosynthesis. Its function is as follows. Provides the (R)-glutamate required for cell wall biosynthesis. The chain is Glutamate racemase from Lactiplantibacillus plantarum (strain ATCC BAA-793 / NCIMB 8826 / WCFS1) (Lactobacillus plantarum).